A 95-amino-acid polypeptide reads, in one-letter code: Pancreatic polypeptide prohormone (95 aa).

Positions 1-29 (MAAARLCLSLLLLSTCVALLLQPLLGAQG) are cleaved as a signal peptide. Y65 is subject to Tyrosine amide. The propeptide occupies 89 to 95 (ELSPLDL).

Belongs to the NPY family.

It is found in the secreted. Functionally, hormone secreted by pancreatic cells that acts as a regulator of pancreatic and gastrointestinal functions probably by signaling through the G protein-coupled receptor NPY4R2. This Homo sapiens (Human) protein is Pancreatic polypeptide prohormone.